We begin with the raw amino-acid sequence, 365 residues long: DNA replication and repair protein RecF (365 aa).

Glycine 30 to threonine 37 serves as a coordination point for ATP.

This sequence belongs to the RecF family.

The protein localises to the cytoplasm. Its function is as follows. The RecF protein is involved in DNA metabolism; it is required for DNA replication and normal SOS inducibility. RecF binds preferentially to single-stranded, linear DNA. It also seems to bind ATP. This is DNA replication and repair protein RecF from Chlamydia trachomatis serovar A (strain ATCC VR-571B / DSM 19440 / HAR-13).